Reading from the N-terminus, the 333-residue chain is Glycerol-3-phosphate dehydrogenase [NAD(P)+] (333 aa).

3 residues coordinate NADPH: Trp12, His31, and Lys105. Residues Lys105, Gly134, and Ser136 each contribute to the sn-glycerol 3-phosphate site. Ala138 contributes to the NADPH binding site. Sn-glycerol 3-phosphate-binding residues include Lys189, Asp242, Ser252, Arg253, and Asn254. The active-site Proton acceptor is the Lys189. Arg253 serves as a coordination point for NADPH. Residues Val278 and Glu280 each contribute to the NADPH site.

This sequence belongs to the NAD-dependent glycerol-3-phosphate dehydrogenase family.

Its subcellular location is the cytoplasm. It catalyses the reaction sn-glycerol 3-phosphate + NAD(+) = dihydroxyacetone phosphate + NADH + H(+). It carries out the reaction sn-glycerol 3-phosphate + NADP(+) = dihydroxyacetone phosphate + NADPH + H(+). It functions in the pathway membrane lipid metabolism; glycerophospholipid metabolism. Catalyzes the reduction of the glycolytic intermediate dihydroxyacetone phosphate (DHAP) to sn-glycerol 3-phosphate (G3P), the key precursor for phospholipid synthesis. The chain is Glycerol-3-phosphate dehydrogenase [NAD(P)+] from Brachyspira hyodysenteriae (strain ATCC 49526 / WA1).